A 123-amino-acid polypeptide reads, in one-letter code: Small ribosomal subunit protein uS12 (123 aa).

Asp-89 is subject to 3-methylthioaspartic acid.

The protein belongs to the universal ribosomal protein uS12 family. In terms of assembly, part of the 30S ribosomal subunit. Contacts proteins S8 and S17. May interact with IF1 in the 30S initiation complex.

Functionally, with S4 and S5 plays an important role in translational accuracy. In terms of biological role, interacts with and stabilizes bases of the 16S rRNA that are involved in tRNA selection in the A site and with the mRNA backbone. Located at the interface of the 30S and 50S subunits, it traverses the body of the 30S subunit contacting proteins on the other side and probably holding the rRNA structure together. The combined cluster of proteins S8, S12 and S17 appears to hold together the shoulder and platform of the 30S subunit. The chain is Small ribosomal subunit protein uS12 from Trichlorobacter lovleyi (strain ATCC BAA-1151 / DSM 17278 / SZ) (Geobacter lovleyi).